A 710-amino-acid chain; its full sequence is Lactoperoxidase (710 aa).

An N-terminal signal peptide occupies residues 1 to 22; that stretch reads MKVLLRLPALLASLTLLQMAAS. Positions 23–98 are excised as a propeptide; sequence TRNATRTATI…WEQSLKRLRR (76 aa). Asn25, Asn104, and Asn131 each carry an N-linked (GlcNAc...) asparagine glycan. An intrachain disulfide couples Cys130 to Cys143. Asp223 is a binding site for heme b. The Proton acceptor role is filled by His224. Residue Asp225 coordinates Ca(2+). Asn238 is a glycosylation site (N-linked (GlcNAc...) asparagine). Intrachain disulfides connect Cys244–Cys254 and Cys248–Cys272. Ca(2+) contacts are provided by Thr299, Phe301, Asp303, and Ser305. The residue at position 313 (Ser313) is a Phosphoserine. Residue Asn320 is glycosylated (N-linked (GlcNAc...) asparagine). The cysteines at positions 352 and 363 are disulfide-linked. Heme b-binding residues include Glu373 and His466. Tyr480 is subject to 3'-nitrotyrosine. Disulfide bonds link Cys571-Cys628 and Cys669-Cys694.

This sequence belongs to the peroxidase family. XPO subfamily. Requires Ca(2+) as cofactor. Heme b serves as cofactor. As to expression, expressed in the lacrimal gland with higher levels and 3-fold higher activity in adult females than males and secreted into tears (at protein level).

It is found in the secreted. The protein resides in the cytoplasm. It catalyses the reaction 2 a phenolic donor + H2O2 = 2 a phenolic radical donor + 2 H2O. The enzyme catalyses thiocyanate + H2O2 + H(+) = hypothiocyanous acid + H2O. The catalysed reaction is iodide + H2O2 = hypoiodite + H2O. In terms of biological role, heme-containing oxidoreductase which catalyzes the conversion of thiocyanate (SCN(-)) into antimicrobial agent hypothiocyanous acid (OSCN(-)) in the presence of hydrogen peroxide (H2O2). Also involved in the conversion of iodide (I(-)) into hypoiodite (IO(-)) in the presence of H2O2. Responsible for the inactivation of a wide range of micro-organisms and hence, important component of defense mechanism. May be implicated in airway host defense against infection. May contribute to maintaining an appropriate H2O2 cellular level, therefore protecting cells from H2O2-caused injuries and inflammation. The chain is Lactoperoxidase (LPO) from Mesocricetus auratus (Golden hamster).